We begin with the raw amino-acid sequence, 521 residues long: 2,3-bisphosphoglycerate-independent phosphoglycerate mutase 2 (521 aa).

2 residues coordinate Mn(2+): Asp-20 and Ser-70. Ser-70 functions as the Phosphoserine intermediate in the catalytic mechanism. Residues His-131, 161 to 162 (RD), Arg-193, Arg-199, 270 to 273 (RPDR), and Lys-343 each bind substrate. 5 residues coordinate Mn(2+): Asp-410, His-414, Asp-451, His-452, and His-470.

This sequence belongs to the BPG-independent phosphoglycerate mutase family. Mn(2+) is required as a cofactor.

The catalysed reaction is (2R)-2-phosphoglycerate = (2R)-3-phosphoglycerate. The protein operates within carbohydrate degradation; glycolysis; pyruvate from D-glyceraldehyde 3-phosphate: step 3/5. Functionally, catalyzes the interconversion of 2-phosphoglycerate and 3-phosphoglycerate. The polypeptide is 2,3-bisphosphoglycerate-independent phosphoglycerate mutase 2 (Methanosarcina acetivorans (strain ATCC 35395 / DSM 2834 / JCM 12185 / C2A)).